A 396-amino-acid chain; its full sequence is Activity-regulated cytoskeleton-associated protein (396 aa).

The stretch at 54–78 (SKQVERELKGLHRSVGKLESNLDGY) forms a coiled coil. The tract at residues 89 to 100 (KSIKACLCRCQE) is interaction with SH3GL1 or SH3GL3. Positions 195–214 (QPWVPGEDGQPSPGVDTQIF) are interaction with DNM2. At S260 the chain carries Phosphoserine. Glycyl lysine isopeptide (Lys-Gly) (interchain with G-Cter in ubiquitin) cross-links involve residues K268 and K269. Phosphothreonine is present on T278. The tract at residues 356-396 (QDDLEQAAEPAGPHLPVEDEAETLTPAPNSESVASDRTQPE) is disordered. Residues 381–396 (PAPNSESVASDRTQPE) show a composition bias toward polar residues.

This sequence belongs to the ARC/ARG3.1 family. Homooligomer; homooligomerizes into virion-like capsids. Interacts with SH3GL1/endophilin-2, SH3GL3/endophilin-3 and DNM2/DYN2. Interacts with CAMK2B (in the kinase inactive state); leading to target ARC to inactive synapses. Interacts with PSEN1. Post-translationally, palmitoylation anchors the protein into the membrane by allowing direct insertion into the hydrophobic core of the lipid bilayer. Ubiquitinated by UBE3A, leading to its degradation by the proteasome, thereby promoting AMPA receptors (AMPARs) expression at synapses. Ubiquitinated by RNF216 at Lys-268 and Lys-269 limiting ARC protein levels induced by synaptic activity and thus regulating ARC-dependent forms of synaptic plasticity. In terms of processing, phosphorylation at Ser-260 by CaMK2 prevents homooligomerization into virion-like capsids by disrupting an interaction surface essential for high-order oligomerization. Phosphorylation by CaMK2 inhibits synaptic activity.

Its subcellular location is the extracellular vesicle membrane. It is found in the postsynaptic cell membrane. The protein resides in the synapse. It localises to the postsynaptic density. The protein localises to the early endosome membrane. Its subcellular location is the cell projection. It is found in the dendrite. The protein resides in the cytoplasm. It localises to the cytoskeleton. The protein localises to the cell cortex. Its subcellular location is the dendritic spine. It is found in the cytoplasmic vesicle. The protein resides in the secretory vesicle. It localises to the acrosome. The protein localises to the clathrin-coated vesicle membrane. Master regulator of synaptic plasticity that self-assembles into virion-like capsids that encapsulate RNAs and mediate intercellular RNA transfer in the nervous system. ARC protein is released from neurons in extracellular vesicles that mediate the transfer of ARC mRNA into new target cells, where ARC mRNA can undergo activity-dependent translation. ARC capsids are endocytosed and are able to transfer ARC mRNA into the cytoplasm of neurons. Acts as a key regulator of synaptic plasticity: required for protein synthesis-dependent forms of long-term potentiation (LTP) and depression (LTD) and for the formation of long-term memory. Regulates synaptic plasticity by promoting endocytosis of AMPA receptors (AMPARs) in response to synaptic activity: this endocytic pathway maintains levels of surface AMPARs in response to chronic changes in neuronal activity through synaptic scaling, thereby contributing to neuronal homeostasis. Acts as a postsynaptic mediator of activity-dependent synapse elimination in the developing cerebellum by mediating elimination of surplus climbing fiber synapses. Accumulates at weaker synapses, probably to prevent their undesired enhancement. This suggests that ARC-containing virion-like capsids may be required to eliminate synaptic material. Required to transduce experience into long-lasting changes in visual cortex plasticity and for long-term memory. Involved in postsynaptic trafficking and processing of amyloid-beta A4 (APP) via interaction with PSEN1. In addition to its role in synapses, also involved in the regulation of the immune system: specifically expressed in skin-migratory dendritic cells and regulates fast dendritic cell migration, thereby regulating T-cell activation. The sequence is that of Activity-regulated cytoskeleton-associated protein from Homo sapiens (Human).